The primary structure comprises 318 residues: BRISC and BRCA1-A complex member 1 (318 aa).

Positions 1–67 (MDTSEPLEEG…TTAVPTNCTP (67 aa)) are disordered. A compositionally biased stretch (basic and acidic residues) spans 9–18 (EGDRTHEQRP). The VWFA-like stretch occupies residues 86–287 (VIICLDLSEE…LELHNCMARL (202 aa)).

Belongs to the BABAM1 family. In terms of assembly, component of the ARISC complex, at least composed of uimc1/rap80, abraxas1, brcc3/brcc36, BABAM2 and babam1/nba1. Component of the BRCA1-A complex, at least composed of brca1, bard1, uimc1/rap80, abraxas1, brcc3/brcc36, BABAM2 and babam1/nba1. In the BRCA1-A complex, interacts directly with abraxas1 and BABAM2. Component of the BRISC complex, at least composed of abraxas2, brcc3/brcc36, babam2 and babam1/nba1.

The protein localises to the cytoplasm. Its subcellular location is the nucleus. Functionally, component of the BRCA1-A complex, a complex that specifically recognizes 'Lys-63'-linked ubiquitinated histones H2A and H2AX at DNA lesions sites, leading to target the BRCA1-BARD1 heterodimer to sites of DNA damage at double-strand breaks (DSBs). The BRCA1-A complex also possesses deubiquitinase activity that specifically removes 'Lys-63'-linked ubiquitin on histones H2A and H2AX. In the BRCA1-A complex, it is required for the complex integrity and its localization at DSBs. Component of the BRISC complex, a multiprotein complex that specifically cleaves 'Lys-63'-linked ubiquitin in various substrates. In these 2 complexes, it is probably required to maintain the stability of BABAM2 and help the 'Lys-63'-linked deubiquitinase activity mediated by brcc3/brcc36 component. The BRISC complex is required for normal mitotic spindle assembly and microtubule attachment to kinetochores via its role in deubiquitinating numa1. Plays a role in interferon signaling via its role in the deubiquitination of the interferon receptor ifnar1; deubiquitination increases ifnar1 activity by enhancing its stability and cell surface expression. Down-regulates the response to bacterial lipopolysaccharide (LPS) via its role in ifnar1 deubiquitination. The sequence is that of BRISC and BRCA1-A complex member 1 (babam1) from Xenopus tropicalis (Western clawed frog).